The following is a 206-amino-acid chain: Peptidyl-tRNA hydrolase (206 aa).

Residue Tyr-14 participates in tRNA binding. The Proton acceptor role is filled by His-19. Residues Phe-64 and Asn-66 each contribute to the tRNA site. Positions 185–206 (VNGEAPKKSKDQAKEPANEQPR) are disordered. Residues 189-206 (APKKSKDQAKEPANEQPR) are compositionally biased toward basic and acidic residues.

The protein belongs to the PTH family. As to quaternary structure, monomer.

It is found in the cytoplasm. It catalyses the reaction an N-acyl-L-alpha-aminoacyl-tRNA + H2O = an N-acyl-L-amino acid + a tRNA + H(+). Its function is as follows. Hydrolyzes ribosome-free peptidyl-tRNAs (with 1 or more amino acids incorporated), which drop off the ribosome during protein synthesis, or as a result of ribosome stalling. Catalyzes the release of premature peptidyl moieties from peptidyl-tRNA molecules trapped in stalled 50S ribosomal subunits, and thus maintains levels of free tRNAs and 50S ribosomes. This is Peptidyl-tRNA hydrolase from Herpetosiphon aurantiacus (strain ATCC 23779 / DSM 785 / 114-95).